The following is a 329-amino-acid chain: DNA-directed RNA polymerase subunit alpha (329 aa).

The tract at residues 1 to 234 (MSGSVTEFLK…EQLDAFVELR (234 aa)) is alpha N-terminal domain (alpha-NTD). An alpha C-terminal domain (alpha-CTD) region spans residues 248 to 329 (FDPILLRPVD…WPPESIAEKD (82 aa)).

The protein belongs to the RNA polymerase alpha chain family. Homodimer. The RNAP catalytic core consists of 2 alpha, 1 beta, 1 beta' and 1 omega subunit. When a sigma factor is associated with the core the holoenzyme is formed, which can initiate transcription.

The enzyme catalyses RNA(n) + a ribonucleoside 5'-triphosphate = RNA(n+1) + diphosphate. Its function is as follows. DNA-dependent RNA polymerase catalyzes the transcription of DNA into RNA using the four ribonucleoside triphosphates as substrates. This is DNA-directed RNA polymerase subunit alpha from Pseudoalteromonas atlantica (strain T6c / ATCC BAA-1087).